The sequence spans 217 residues: Protein-L-isoaspartate O-methyltransferase (217 aa).

S64 is a catalytic residue.

It belongs to the methyltransferase superfamily. L-isoaspartyl/D-aspartyl protein methyltransferase family.

It is found in the cytoplasm. It carries out the reaction [protein]-L-isoaspartate + S-adenosyl-L-methionine = [protein]-L-isoaspartate alpha-methyl ester + S-adenosyl-L-homocysteine. Functionally, catalyzes the methyl esterification of L-isoaspartyl residues in peptides and proteins that result from spontaneous decomposition of normal L-aspartyl and L-asparaginyl residues. It plays a role in the repair and/or degradation of damaged proteins. This chain is Protein-L-isoaspartate O-methyltransferase, found in Azorhizobium caulinodans (strain ATCC 43989 / DSM 5975 / JCM 20966 / LMG 6465 / NBRC 14845 / NCIMB 13405 / ORS 571).